The chain runs to 257 residues: MTTMSGYTRSQRPRQAILGQLPRIHRADGSPIRVLLVDDEPALTNLVKMALHYEGWDVEVAHDGQEAIAKFDKVGPDVLVLDIMLPDVDGLEILRRVRESDVYTPTLFLTARDSVMDRVTGLTSGADDYMTKPFSLEELVARLRGLLRRSSHLERPADEALRVGDLTLDGASREVTRDGTPISLSSTEFELLRFLMRNPRRALSRTEILDRVWNYDFAGRTSIVDLYISYLRKKIDSDREPMIHTVRGIGYMLRPPE.

In terms of domain architecture, Response regulatory spans 33–147 (RVLLVDDEPA…ELVARLRGLL (115 aa)). Asp82 carries the post-translational modification 4-aspartylphosphate. The ompR/PhoB-type DNA-binding region spans 158-255 (DEALRVGDLT…VRGIGYMLRP (98 aa)).

Post-translationally, phosphorylated by TrcS.

In terms of biological role, member of the two-component regulatory system TrcS/TrcR. Activates its own expression by binding specifically to the AT-rich sequence of the trcR promoter region. Also negatively regulates the expression of Rv1057 by binding to an AT-rich sequences within the Rv1057 upstream sequence. The TrcR-TrcS regulatory system may act as a transition regulatory system involved in adapting to an intracellular environment and transitioning from latency to reactivation. This Mycobacterium tuberculosis (strain ATCC 25618 / H37Rv) protein is Transcriptional regulatory protein TrcR.